A 243-amino-acid polypeptide reads, in one-letter code: UPF0246 protein SAG2081 (243 aa).

It belongs to the UPF0246 family.

The protein is UPF0246 protein SAG2081 of Streptococcus agalactiae serotype V (strain ATCC BAA-611 / 2603 V/R).